The following is a 185-amino-acid chain: Translocon-associated protein subunit gamma (185 aa).

M1 bears the N-acetylmethionine mark. The Lumenal segment spans residues 1–27 (MAPKGSCKQQSEEDLLLQDFSRNLSAK). S11 is modified (phosphoserine). Residues 28–48 (SSALFFGNAFIVSAIPIWLYW) traverse the membrane as a helical segment. At 49–54 (RIWHMD) the chain is on the cytoplasmic side. The helical transmembrane segment at 55–76 (LIQSAVLYSVMTLVSTYLVAFA) threads the bilayer. Residues 77 to 135 (YKNVKFVLKHKVAQKREDAVSKEVTRKLSEADNRKMSRKEKDERILWKKNEVADYEATT) are Lumenal-facing. Residue S105 is modified to Phosphoserine. A helical transmembrane segment spans residues 136-157 (FSIFYNNTLFLVVVIVASFFIL). The Cytoplasmic segment spans residues 158-163 (KNFNPT). A helical transmembrane segment spans residues 164 to 184 (VNYILSISASSGLIALLSTGS).

This sequence belongs to the TRAP-gamma family. In terms of assembly, heterotetramer of TRAP-alpha, TRAP-beta, TRAP-delta and TRAP-gamma.

It localises to the endoplasmic reticulum membrane. Its function is as follows. TRAP proteins are part of a complex whose function is to bind calcium to the ER membrane and thereby regulate the retention of ER resident proteins. In Pongo abelii (Sumatran orangutan), this protein is Translocon-associated protein subunit gamma (SSR3).